We begin with the raw amino-acid sequence, 183 residues long: Translation initiation factor IF-3 (183 aa).

The protein belongs to the IF-3 family. As to quaternary structure, monomer.

Its subcellular location is the cytoplasm. In terms of biological role, IF-3 binds to the 30S ribosomal subunit and shifts the equilibrium between 70S ribosomes and their 50S and 30S subunits in favor of the free subunits, thus enhancing the availability of 30S subunits on which protein synthesis initiation begins. The polypeptide is Translation initiation factor IF-3 (Serratia marcescens).